The primary structure comprises 390 residues: Formamidopyrimidine-DNA glycosylase (390 aa).

The Schiff-base intermediate with DNA role is filled by P2. Residue E3 is the Proton donor of the active site. The active-site Proton donor; for beta-elimination activity is the K60. DNA is bound by residues Y107, R126, K167, and N186. A disordered region spans residues 283–390 (AEKAAKVRPA…AGKKPKGRKS (108 aa)). The segment covering 301–316 (DDGDGEEDEQETEKED) has biased composition (acidic residues). Positions 321–337 (SKKGQKPRGGRGKKPAS) are enriched in basic residues. The segment covering 343 to 355 (ESDDDGDDSEAEE) has biased composition (acidic residues). Residues 360–370 (PKGRGTKPAIK) are compositionally biased toward basic residues.

It belongs to the FPG family. Monomer. As to expression, expressed in leaves (at protein levels).

The protein localises to the nucleus. The catalysed reaction is Hydrolysis of DNA containing ring-opened 7-methylguanine residues, releasing 2,6-diamino-4-hydroxy-5-(N-methyl)formamidopyrimidine.. It carries out the reaction 2'-deoxyribonucleotide-(2'-deoxyribose 5'-phosphate)-2'-deoxyribonucleotide-DNA = a 3'-end 2'-deoxyribonucleotide-(2,3-dehydro-2,3-deoxyribose 5'-phosphate)-DNA + a 5'-end 5'-phospho-2'-deoxyribonucleoside-DNA + H(+). Its function is as follows. Involved in base excision repair of DNA damaged by oxidation or by mutagenic agents. Acts as a DNA glycosylase that recognizes and removes damaged bases. Can process efficiently 4,6-diamino-5-formamidopyrimidine (FapyA), 2,6-diamino-4- hydroxy-5-formamidopyrimidine (FapyG) and the further oxidation products of 8-oxoguanine (8-oxoG), such as guanidinohydantoin and spiroiminodihydantoin. Has marginal activity towards 8-oxoG. Has AP (apurinic/apyrimidinic) lyase activity. Cleaves the DNA backbone by beta-delta elimination to generate a single-strand break at the site of the removed base with both 3'- and 5'-phosphates. The protein is Formamidopyrimidine-DNA glycosylase (FPG1) of Arabidopsis thaliana (Mouse-ear cress).